The sequence spans 288 residues: UTP--glucose-1-phosphate uridylyltransferase (288 aa).

It belongs to the UDPGP type 2 family.

The catalysed reaction is alpha-D-glucose 1-phosphate + UTP + H(+) = UDP-alpha-D-glucose + diphosphate. It functions in the pathway glycolipid metabolism; diglucosyl-diacylglycerol biosynthesis. Its function is as follows. Catalyzes the formation of UDP-glucose from glucose-1-phosphate and UTP. This is an intermediate step in the biosynthesis of diglucosyl-diacylglycerol (Glc2-DAG), i.e. a glycolipid found in the membrane, which is also used as a membrane anchor for lipoteichoic acid (LTA). The protein is UTP--glucose-1-phosphate uridylyltransferase (gtaB) of Staphylococcus epidermidis (strain ATCC 35984 / DSM 28319 / BCRC 17069 / CCUG 31568 / BM 3577 / RP62A).